The following is a 496-amino-acid chain: Sugar transporter ERD6 (496 aa).

6 helical membrane passes run 58 to 78 (VFLSTFVAVSGSFCTGCGVGF), 94 to 114 (VAEYSMFGSILTLGGLIGAVF), 128 to 148 (MLFCEFFCITGWLCVALAQNA), 156 to 176 (LLLGIGVGIFSYVIPVYIAEI), 183 to 203 (GSFVFANQLMQNCGISLFFII), and 211 to 231 (LLTVVGLVPCVFHVFCLFFIP). The residue at position 256 (serine 256) is a Phosphoserine. The next 6 helical transmembrane spans lie at 292–312 (YPLIIGVGLMFLQQLCGSSGV), 329–349 (IGTSVIATIMVPKAMLATVLV), 364–384 (AMGLSALLLSVSYGFQSFGIL), 394–414 (IGVLGHIVSFAMGMGGLPWII), 430–450 (LVTVTNWLFGWIITYTFNFML), and 456–476 (GMFLIFSMVSASSIVFIYFLV).

Belongs to the major facilitator superfamily. Sugar transporter (TC 2.A.1.1) family. As to expression, expressed in both shoots and roots. In roots, expressed in epidermal cells and especially strongly in cortex cells. In flowers, expressed in sepals.

The protein resides in the membrane. Sugar transporter. The sequence is that of Sugar transporter ERD6 (ERD6) from Arabidopsis thaliana (Mouse-ear cress).